A 67-amino-acid polypeptide reads, in one-letter code: Cell division protein ZapB (67 aa).

Residues 3–59 are a coiled coil; the sequence is LELLSKLETKIQTALETIELLKMELEEEKQKSIGLAEQNQQLSQDLNSWNEKVTGLV.

It belongs to the ZapB family. As to quaternary structure, homodimer. The ends of the coiled-coil dimer bind to each other, forming polymers. Interacts with FtsZ.

It localises to the cytoplasm. Its function is as follows. Non-essential, abundant cell division factor that is required for proper Z-ring formation. It is recruited early to the divisome by direct interaction with FtsZ, stimulating Z-ring assembly and thereby promoting cell division earlier in the cell cycle. Its recruitment to the Z-ring requires functional FtsA or ZipA. This Shewanella woodyi (strain ATCC 51908 / MS32) protein is Cell division protein ZapB.